We begin with the raw amino-acid sequence, 813 residues long: Ribonuclease R (813 aa).

An RNB domain is found at 260–587; it reads RVDLRDLPLV…LHRAIKYLLA (328 aa). An N6-acetyllysine modification is found at Lys-544. Residues 644 to 725 enclose the S1 motif domain; sequence GNVFKGVISS…DERKIDFSLI (82 aa). Residues 733–813 are disordered; sequence NVGKTAREKA…KRAAKKKVAE (81 aa). Composition is skewed to basic and acidic residues over residues 737–749 and 761–774; these read TARE…DAGK and VNFE…GEKK. Basic residues predominate over residues 775 to 791; it reads TKPKAAKKDARKAKKPS. Residues 792 to 801 are compositionally biased toward low complexity; that stretch reads AKTQKIAAAT. The span at 802–813 shows a compositional bias: basic residues; it reads KAKRAAKKKVAE.

The protein belongs to the RNR ribonuclease family. RNase R subfamily. As to quaternary structure, monomer.

The protein localises to the cytoplasm. It catalyses the reaction Exonucleolytic cleavage in the 3'- to 5'-direction to yield nucleoside 5'-phosphates.. Its function is as follows. 3'-5' exoribonuclease that releases 5'-nucleoside monophosphates and is involved in maturation of structured RNAs. Required for the expression of virulence genes on the large plasmid of S.flexneri at the post-transcriptional level. The chain is Ribonuclease R from Shigella flexneri.